A 137-amino-acid chain; its full sequence is Large ribosomal subunit protein uL16 (137 aa).

Positions 1–13 (MLQPSRRKYRKEQ) are enriched in basic residues. Residues 1–22 (MLQPSRRKYRKEQKGRNTGLAT) form a disordered region.

This sequence belongs to the universal ribosomal protein uL16 family. As to quaternary structure, part of the 50S ribosomal subunit.

Its function is as follows. Binds 23S rRNA and is also seen to make contacts with the A and possibly P site tRNAs. The sequence is that of Large ribosomal subunit protein uL16 from Azoarcus sp. (strain BH72).